The following is a 486-amino-acid chain: Probable glycine dehydrogenase (decarboxylating) subunit 2 (486 aa).

Position 273 is an N6-(pyridoxal phosphate)lysine (Lys273).

This sequence belongs to the GcvP family. C-terminal subunit subfamily. The glycine cleavage system is composed of four proteins: P, T, L and H. In this organism, the P 'protein' is a heterodimer of two subunits. Pyridoxal 5'-phosphate serves as cofactor.

It catalyses the reaction N(6)-[(R)-lipoyl]-L-lysyl-[glycine-cleavage complex H protein] + glycine + H(+) = N(6)-[(R)-S(8)-aminomethyldihydrolipoyl]-L-lysyl-[glycine-cleavage complex H protein] + CO2. In terms of biological role, the glycine cleavage system catalyzes the degradation of glycine. The P protein binds the alpha-amino group of glycine through its pyridoxal phosphate cofactor; CO(2) is released and the remaining methylamine moiety is then transferred to the lipoamide cofactor of the H protein. This is Probable glycine dehydrogenase (decarboxylating) subunit 2 from Alkaliphilus oremlandii (strain OhILAs) (Clostridium oremlandii (strain OhILAs)).